Here is a 442-residue protein sequence, read N- to C-terminus: Cell cycle checkpoint control protein RAD9B (442 aa).

Disordered regions lie at residues 370–392 and 422–442; these read EVPE…TEDV and QSLA…FSTF. S387 carries the post-translational modification Phosphoserine.

It belongs to the rad9 family. In terms of assembly, interacts with HUS1, HUS1B, RAD1, RAD9A and RAD17.

This Bos taurus (Bovine) protein is Cell cycle checkpoint control protein RAD9B (RAD9B).